The following is a 508-amino-acid chain: Bifunctional purine biosynthesis protein PurH (508 aa).

One can recognise an MGS-like domain in the interval 1–144 (MTRALLSVSD…KNFAGVLPIV (144 aa)).

The protein belongs to the PurH family.

It catalyses the reaction (6R)-10-formyltetrahydrofolate + 5-amino-1-(5-phospho-beta-D-ribosyl)imidazole-4-carboxamide = 5-formamido-1-(5-phospho-D-ribosyl)imidazole-4-carboxamide + (6S)-5,6,7,8-tetrahydrofolate. The enzyme catalyses IMP + H2O = 5-formamido-1-(5-phospho-D-ribosyl)imidazole-4-carboxamide. The protein operates within purine metabolism; IMP biosynthesis via de novo pathway; 5-formamido-1-(5-phospho-D-ribosyl)imidazole-4-carboxamide from 5-amino-1-(5-phospho-D-ribosyl)imidazole-4-carboxamide (10-formyl THF route): step 1/1. It functions in the pathway purine metabolism; IMP biosynthesis via de novo pathway; IMP from 5-formamido-1-(5-phospho-D-ribosyl)imidazole-4-carboxamide: step 1/1. This is Bifunctional purine biosynthesis protein PurH from Leuconostoc citreum (strain KM20).